We begin with the raw amino-acid sequence, 264 residues long: O-methyltransferase resE (264 aa).

Q97 and H142 together coordinate S-adenosyl-L-methionine.

This sequence belongs to the methyltransferase superfamily.

The enzyme catalyses desmethylrestrictinol + S-adenosyl-L-methionine = restrictinol + S-adenosyl-L-homocysteine + H(+). It functions in the pathway antifungal biosynthesis. O-methyltransferase; part of the gene cluster that mediates the biosynthesis of the tetrahydropyranyl antifungal agent restricticin that acts as an inhibitor of CYP51 and blocks the ergosterol biosynthesis. Within the pathway, resE uses S-adenosylmethionine to methylate position C4 of desmethylrestrictinol to produce restrictinol. The highly reducing polyketide synthase resH, the short chain dehydrogenase resG, the cyclase resF, the FAD-dependent monooxygenase resA and the enoylreductase resD are required to generate the first stable intermediate desmethylrestrictinol. ResH with resD biosynthesize the first polyketide chain intermediate that is reduced by resG, followed by epoxidation by resA before 6-endo cyclization via epoxide opening by resF leads to desmethylrestrictinol. The methyltransferase resE then catalyzes the C4 O-methylation of desmethylrestrictinol to produce restrictinol, and the nonribosomal peptide synthetase resC catalyzes the C3 esterification of restrictinol with glycine that leads to restricticin. The sequence is that of O-methyltransferase resE from Aspergillus sclerotiorum.